We begin with the raw amino-acid sequence, 381 residues long: Protein TRIGALACTOSYLDIACYLGLYCEROL 2, chloroplastic (381 aa).

Residues 1–45 (MIGNPVIQVPSSLMPSSSMIACPRVSPNGVPYLPPKPRTRHLVVR) constitute a chloroplast transit peptide. The Stromal segment spans residues 46–96 (AASNSDAAHGQPSSDGGKNPLTVVLDVPRNIWRQTLKPLSDFGFGKRSIWE). Residues 97 to 117 (GGVGLFIVSGATLLALSWAWL) traverse the membrane as a helical segment. Topologically, residues 118–381 (RGFQMRSKFR…LLIKSLSRLL (264 aa)) are chloroplast intermembrane.

In terms of assembly, homomultimer. Substrate-binding subunit of the TGD complex, a lipid translocator at the inner chloroplast envelope membrane made of TGD1, TGD2 and TGD3. Interacts with TGD1 and TGD3 with an overall subunit stoichiometry of 2 TGD1, 2 TGD3 and 8 to 12 TGD2. Interacts with TGD5.

It localises to the plastid. The protein localises to the chloroplast inner membrane. Functionally, component of a phosphatidic acid/lipid transport complex in the chloroplast envelope. Specifically binds phosphatidic acid (PA). Involved in lipid transfer from the endoplasmic reticulum (ER) to plastids, and necessary for thylakoids formation. This Arabidopsis thaliana (Mouse-ear cress) protein is Protein TRIGALACTOSYLDIACYLGLYCEROL 2, chloroplastic.